Consider the following 327-residue polypeptide: tRNA N6-adenosine threonylcarbamoyltransferase (327 aa).

Residues histidine 107 and histidine 111 each contribute to the Fe cation site. Substrate-binding positions include 129 to 133 (LVSGG), aspartate 162, glycine 175, and asparagine 263. Aspartate 291 is a binding site for Fe cation.

This sequence belongs to the KAE1 / TsaD family. It depends on Fe(2+) as a cofactor.

It is found in the cytoplasm. The enzyme catalyses L-threonylcarbamoyladenylate + adenosine(37) in tRNA = N(6)-L-threonylcarbamoyladenosine(37) in tRNA + AMP + H(+). Required for the formation of a threonylcarbamoyl group on adenosine at position 37 (t(6)A37) in tRNAs that read codons beginning with adenine. Is involved in the transfer of the threonylcarbamoyl moiety of threonylcarbamoyl-AMP (TC-AMP) to the N6 group of A37, together with TsaE and TsaB. TsaD likely plays a direct catalytic role in this reaction. The sequence is that of tRNA N6-adenosine threonylcarbamoyltransferase from Nautilia profundicola (strain ATCC BAA-1463 / DSM 18972 / AmH).